A 143-amino-acid chain; its full sequence is Ninjurin-2 (143 aa).

Topologically, residues 1-61 are extracellular; it reads MESDRETIHL…KSVLQQGPFA (61 aa). A helix alpha1 region spans residues 26-38; that stretch reads NFYATKKSVAESM. Residues 39-58 form a helix alpha2 region; that stretch reads LDVALFMSNAMRLKSVLQQG. Residues 62-93 form a helical membrane-spanning segment; that stretch reads EYYTTLVTLIIVSLLLQVVISLLLVFIAILNL. The Cytoplasmic segment spans residues 94–97; the sequence is NEVE. The helical transmembrane segment at 98 to 127 threads the bilayer; it reads NQRHLNKLNNAATILVFITVVINIFITAFG. Lys104 serves as a coordination point for cholesterol. At 128-143 the chain is on the extracellular side; it reads AHHAASMAARTSSNPI.

This sequence belongs to the ninjurin family. Homooligomer; in response to stimuli, homooligomerizes into filaments. In contrast to NINJ1, the filament is curved toward the intracellular space, preventing its circularization on a relatively flat membrane to mediate plasma membrane rupture: curvature is caused by cholesterol-binding at the cytoplasmic leaflet.

The protein localises to the cell membrane. In terms of biological role, its role in unclear. In contrast to NINJ1 paralog, does not mediate plasma membrane rupture (cytolysis) downstream of necroptotic and pyroptotic programmed cell death. While it is able to oligomerize and form filaments, filaments are curved toward the intracellular space, preventing circularization to mediate plasma membrane rupture. May act as a homophilic transmembrane adhesion molecule involved in nerve regeneration. Promotes axonal growth. The polypeptide is Ninjurin-2 (Ninj2) (Mus musculus (Mouse)).